We begin with the raw amino-acid sequence, 149 residues long: Protein AIM7 (149 aa).

Ser2 is subject to N-acetylserine. Residues 3 to 147 form the ADF-H domain; sequence NLYKIGTETR…DVEELREQLE (145 aa). Ser137 bears the Phosphoserine mark.

This sequence belongs to the actin-binding proteins ADF family. GMF subfamily.

Its subcellular location is the cytoplasm. The protein resides in the nucleus. Functionally, may be involved in mitochondrial organization and biogenesis. This chain is Protein AIM7 (AIM7), found in Saccharomyces cerevisiae (strain ATCC 204508 / S288c) (Baker's yeast).